A 248-amino-acid polypeptide reads, in one-letter code: Probable transcriptional regulatory protein RHECIAT_CH0003714 (248 aa).

This sequence belongs to the TACO1 family.

The protein resides in the cytoplasm. The sequence is that of Probable transcriptional regulatory protein RHECIAT_CH0003714 from Rhizobium etli (strain CIAT 652).